The following is a 260-amino-acid chain: Flap endonuclease Xni (260 aa).

Aspartate 112 is a Mg(2+) binding site. One can recognise a 5'-3' exonuclease domain in the interval 168-258; the sequence is LQPSQLVDFW…FNLKDLRYTP (91 aa). Leucine 179, valine 190, and isoleucine 193 together coordinate K(+). The interval 192–197 is interaction with DNA; sequence GIGEKT.

This sequence belongs to the Xni family. It depends on Mg(2+) as a cofactor. K(+) is required as a cofactor.

Its function is as follows. Has flap endonuclease activity. During DNA replication, flap endonucleases cleave the 5'-overhanging flap structure that is generated by displacement synthesis when DNA polymerase encounters the 5'-end of a downstream Okazaki fragment. The polypeptide is Flap endonuclease Xni (Tolumonas auensis (strain DSM 9187 / NBRC 110442 / TA 4)).